The primary structure comprises 519 residues: F-box only protein 31-A (519 aa).

Residues 11–37 (GQSGGCRRRQQRKGAGNDPELEDEEEE) are disordered. The F-box domain maps to 54 to 100 (PHSLLLLPPEILVEIFSLLPGTELGGLAQVCSKFRQILTTDTIWKRR). The Zn(2+) site is built by cysteine 196, histidine 204, cysteine 220, and histidine 226. Positions 369–390 (REQRQTDNEEDDGRGAGPDKAE) are enriched in basic and acidic residues. Positions 369 to 424 (REQRQTDNEEDDGRGAGPDKAEPAQQPAPLLRPPNEDANGADDDGDGGEQKPPNVQ) are disordered.

Belongs to the FBXO31 family. As to quaternary structure, part of a SCF (SKP1-cullin-F-box) protein ligase complex SCF(FBXO31).

It is found in the cytoplasm. It participates in protein modification; protein ubiquitination. In terms of biological role, substrate-recognition component of the SCF(FBXO31) protein ligase complex, which specifically mediates the ubiquitination of proteins amidated at their C-terminus in response to oxidative stress, leading to their degradation by the proteasome. Fbxo31 specifically recognizes and binds C-terminal peptides bearing an amide: C-terminal amidation in response to oxidative stress takes place following protein fragmentation. The SCF(FBXO31) also plays a role in G1 arrest following DNA damage by mediating ubiquitination of phosphorylated cyclin-D1 (ccnd1), promoting its degradation by the proteasome, resulting in G1 arrest. The SCF(FBXO31) complex is however not a major regulator of ccnd1 stability during the G1/S transition. This is F-box only protein 31-A (fbxo31-a) from Xenopus laevis (African clawed frog).